The following is a 218-amino-acid chain: Protein-L-isoaspartate O-methyltransferase 1 (218 aa).

S69 is an active-site residue.

This sequence belongs to the methyltransferase superfamily. L-isoaspartyl/D-aspartyl protein methyltransferase family.

The protein resides in the cytoplasm. It catalyses the reaction [protein]-L-isoaspartate + S-adenosyl-L-methionine = [protein]-L-isoaspartate alpha-methyl ester + S-adenosyl-L-homocysteine. Functionally, catalyzes the methyl esterification of L-isoaspartyl residues in peptides and proteins that result from spontaneous decomposition of normal L-aspartyl and L-asparaginyl residues. It plays a role in the repair and/or degradation of damaged proteins. The protein is Protein-L-isoaspartate O-methyltransferase 1 of Marinobacter nauticus (strain ATCC 700491 / DSM 11845 / VT8) (Marinobacter aquaeolei).